Reading from the N-terminus, the 536-residue chain is Sensory rhodopsin I transducer (536 aa).

Residues 2–14 (TIAWARRRYGVKL) are Cytoplasmic-facing. The chain crosses the membrane as a helical span at residues 15 to 29 (GLGYIATAGLLVGVG). Over 30–39 (VTTNDVPSTI) the chain is Extracellular. Residues 40-55 (VAGIAGLLTLGSINAA) form a helical membrane-spanning segment. The region spanning 55-107 (AETVASIKEIAAQTERVANGNLEQEVTSTRTDEFGSLADSIEQMRQSLRGRLN) is the HAMP 1 domain. The Cytoplasmic segment spans residues 56–536 (ETVASIKEIA…MRAGADGGGA (481 aa)). Positions 116–145 (LEETQAEAETAREEAEQAKQEAQAAEREAR) are disordered. Basic and acidic residues predominate over residues 124–145 (ETAREEAEQAKQEAQAAEREAR). In terms of domain architecture, HAMP 2 spans 149-202 (ATYQDTAKRYGETMEAAATGDLTQRVDVDTDHEAMETVGTAFNQMMDDLQATVR). The Methyl-accepting transducer domain maps to 221 to 459 (TSADIEASAG…STATSVERVA (239 aa)). The residue at position 266 (glutamate 266) is a Glutamate methyl ester (Glu). The tract at residues 278 to 307 (SEDVATASDAARDSSKSALDEMSSIETEVD) is disordered. The segment covering 287–296 (AARDSSKSAL) has biased composition (basic and acidic residues). Glutamate 473 carries the post-translational modification Glutamate methyl ester (Glu). The interval 512 to 536 (TEDSETAGGSVEQPVMRAGADGGGA) is disordered.

The protein belongs to the methyl-accepting chemotaxis (MCP) protein family. Post-translationally, methylated by CheR.

It localises to the cell membrane. In terms of biological role, transduces signals from the phototaxis receptor sensory rhodopsin I (SR-I) to the flagellar motor. Responds to light changes through the variation of the level of methylation. The polypeptide is Sensory rhodopsin I transducer (htr1) (Halobacterium salinarum (strain ATCC 29341 / DSM 671 / R1)).